The primary structure comprises 445 residues: T-box transcription factor TBX19 (445 aa).

Residues 45–218 (LEDAPLWQRF…YNPFAKAFLD (174 aa)) constitute a DNA-binding region (T-box).

The protein resides in the nucleus. Transcriptional regulator involved in developmental processes. Can activate POMC gene expression and repress the alpha glycoprotein subunit and thyroid-stimulating hormone beta promoters. This chain is T-box transcription factor TBX19, found in Canis lupus familiaris (Dog).